Consider the following 291-residue polypeptide: Transmembrane protein 41B (291 aa).

Residues 1–11 (MAKGRVAERSQ) are compositionally biased toward basic and acidic residues. Residues 1–38 (MAKGRVAERSQTEMLHSTPAGDRAVGTQGSAAPGNKDH) form a disordered region. At Thr-18 the chain carries Phosphothreonine. 6 helical membrane-spanning segments follow: residues 52–72 (TSLL…FLVY), 109–129 (FYVQ…TFAI), 147–169 (LALF…LSYL), 197–217 (LINY…FINI), 225–245 (PLKV…FVAI), and 262–282 (SWNS…PAIF). The interval 140–251 (GFLYPFPLAL…FVAIKAGTTL (112 aa)) is VTT domain; required for its function in autophagy.

Belongs to the TMEM41 family. Interacts with VMP1. Interacts with COPA, COPB1, VDAC1 and ERLIN2. Interacts with ATG2A. Interacts with SURF4.

It is found in the endoplasmic reticulum membrane. The protein resides in the endomembrane system. It catalyses the reaction a 1,2-diacyl-sn-glycero-3-phospho-L-serine(in) = a 1,2-diacyl-sn-glycero-3-phospho-L-serine(out). The enzyme catalyses cholesterol(in) = cholesterol(out). It carries out the reaction a 1,2-diacyl-sn-glycero-3-phosphocholine(in) = a 1,2-diacyl-sn-glycero-3-phosphocholine(out). The catalysed reaction is a 1,2-diacyl-sn-glycero-3-phosphoethanolamine(in) = a 1,2-diacyl-sn-glycero-3-phosphoethanolamine(out). Phospholipid scramblase involved in lipid homeostasis and membrane dynamics processes. Has phospholipid scramblase activity toward cholesterol and phosphatidylserine, as well as phosphatidylethanolamine and phosphatidylcholine. Required for autophagosome formation: participates in early stages of autophagosome biogenesis at the endoplasmic reticulum (ER) membrane by reequilibrating the leaflets of the ER as lipids are extracted by ATG2 (ATG2A or ATG2B) to mediate autophagosome assembly. In addition to autophagy, involved in other processes in which phospholipid scramblase activity is required. Required for normal motor neuron development. This Rattus norvegicus (Rat) protein is Transmembrane protein 41B.